Consider the following 286-residue polypeptide: Cysteine-rich repeat secretory protein 57 (286 aa).

Residues 1 to 20 form the signal peptide; that stretch reads METTKKLSVLLCLFFTMNQA. The Extracellular portion of the chain corresponds to 21–265; sequence ISESDSDEHM…PSRSGSFSIR (245 aa). Gnk2-homologous domains are found at residues 29 to 131 and 137 to 247; these read HMAT…DKFF and TKPN…TSNS. 10 N-linked (GlcNAc...) asparagine glycosylation sites follow: Asn-35, Asn-40, Asn-44, Asn-60, Asn-69, Asn-90, Asn-100, Asn-108, Asn-209, and Asn-246. Residues 266–284 traverse the membrane as a helical segment; sequence GNNKILVGMILAVSVFAFL. Topologically, residues 285-286 are cytoplasmic; it reads GL.

The protein belongs to the cysteine-rich repeat secretory protein family.

It is found in the membrane. In Arabidopsis thaliana (Mouse-ear cress), this protein is Cysteine-rich repeat secretory protein 57 (CRRSP57).